Reading from the N-terminus, the 658-residue chain is Pentatricopeptide repeat-containing protein 7, mitochondrial (658 aa).

A mitochondrion-targeting transit peptide spans 1 to 29 (MRNCVSPLLFAWTKHLRLREFKIPFPNRL). PPR repeat units lie at residues 130 to 164 (VKKR…TPIW) and 220 to 254 (LYVE…SESL).

It is found in the mitochondrion. Its function is as follows. Mitochondrial RNA-binding protein required for the stability of the atp6 mRNA. This is Pentatricopeptide repeat-containing protein 7, mitochondrial (ppr7) from Schizosaccharomyces pombe (strain 972 / ATCC 24843) (Fission yeast).